Consider the following 775-residue polypeptide: Polyribonucleotide nucleotidyltransferase (775 aa).

Residues 223–247 (DEQVPEKPRKGRRRGRKSSPRKKTD) form a disordered region. The segment covering 231–243 (RKGRRRGRKSSPR) has biased composition (basic residues). Mg(2+) contacts are provided by aspartate 567 and aspartate 573. Positions 633–692 (PRITTISVPVSKIGEVIGPKGKNINQITEDTGARVSIEDDGTVFISATSGGSAEAAVDRI) constitute a KH domain. The S1 motif domain maps to 704–773 (GERFLGTVVK…NRGKISLVPV (70 aa)).

This sequence belongs to the polyribonucleotide nucleotidyltransferase family. Mg(2+) serves as cofactor.

Its subcellular location is the cytoplasm. The enzyme catalyses RNA(n+1) + phosphate = RNA(n) + a ribonucleoside 5'-diphosphate. In terms of biological role, involved in mRNA degradation. Catalyzes the phosphorolysis of single-stranded polyribonucleotides processively in the 3'- to 5'-direction. The protein is Polyribonucleotide nucleotidyltransferase of Corynebacterium kroppenstedtii (strain DSM 44385 / JCM 11950 / CIP 105744 / CCUG 35717).